Consider the following 174-residue polypeptide: Large ribosomal subunit protein uL10 (174 aa).

This sequence belongs to the universal ribosomal protein uL10 family. In terms of assembly, part of the ribosomal stalk of the 50S ribosomal subunit. The N-terminus interacts with L11 and the large rRNA to form the base of the stalk. The C-terminus forms an elongated spine to which L12 dimers bind in a sequential fashion forming a multimeric L10(L12)X complex.

Functionally, forms part of the ribosomal stalk, playing a central role in the interaction of the ribosome with GTP-bound translation factors. In Geobacter metallireducens (strain ATCC 53774 / DSM 7210 / GS-15), this protein is Large ribosomal subunit protein uL10.